The primary structure comprises 362 residues: S-adenosylmethionine decarboxylase proenzyme (362 aa).

Active-site residues include Glu11 and Glu14. Catalysis depends on Ser71, which acts as the Schiff-base intermediate with substrate; via pyruvic acid. Pyruvic acid (Ser); by autocatalysis is present on Ser71. The active-site Proton donor; for catalytic activity is Cys85. Residues Ser234 and His247 each act as proton acceptor; for processing activity in the active site.

This sequence belongs to the eukaryotic AdoMetDC family. It depends on pyruvate as a cofactor. Post-translationally, is synthesized initially as an inactive proenzyme. Formation of the active enzyme involves a self-maturation process in which the active site pyruvoyl group is generated from an internal serine residue via an autocatalytic post-translational modification. Two non-identical subunits are generated from the proenzyme in this reaction, and the pyruvate is formed at the N-terminus of the alpha chain, which is derived from the carboxyl end of the proenzyme. The post-translation cleavage follows an unusual pathway, termed non-hydrolytic serinolysis, in which the side chain hydroxyl group of the serine supplies its oxygen atom to form the C-terminus of the beta chain, while the remainder of the serine residue undergoes an oxidative deamination to produce ammonia and the pyruvoyl group blocking the N-terminus of the alpha chain.

The catalysed reaction is S-adenosyl-L-methionine + H(+) = S-adenosyl 3-(methylsulfanyl)propylamine + CO2. It participates in amine and polyamine biosynthesis; S-adenosylmethioninamine biosynthesis; S-adenosylmethioninamine from S-adenosyl-L-methionine: step 1/1. This chain is S-adenosylmethionine decarboxylase proenzyme (SAMDC), found in Ipomoea batatas (Sweet potato).